The following is a 454-amino-acid chain: Transmembrane protein adipocyte-associated 1 homolog (454 aa).

Residues Asn-26 and Asn-44 are each glycosylated (N-linked (GlcNAc...) asparagine). Helical transmembrane passes span 80-100 (AILI…TSVI), 113-133 (AFTL…VYSM), 151-171 (IIIK…GLLF), 180-200 (ILIA…VQVI), and 224-244 (FVFW…IMCL). Asn-258 carries an N-linked (GlcNAc...) asparagine glycan. The next 2 helical transmembrane spans lie at 262-282 (FIYC…AALI) and 290-310 (LCFV…IIYF). Residues Asn-322 and Asn-323 are each glycosylated (N-linked (GlcNAc...) asparagine). The interval 408-454 (RTGSDDFAHHRDSMLSEPSTGTTTRHLKGLGPQGSLVFEEDPSSLRL) is disordered. Basic and acidic residues predominate over residues 410 to 421 (GSDDFAHHRDSM). Residues 445-454 (FEEDPSSLRL) show a composition bias toward acidic residues.

It belongs to the UPF0359 family.

It is found in the membrane. The polypeptide is Transmembrane protein adipocyte-associated 1 homolog (tpra-1) (Caenorhabditis briggsae).